The primary structure comprises 90 residues: Small ribosomal subunit protein bS20 (90 aa).

A disordered region spans residues 1-21; sequence MANHKSALKRVRQTKKRTERN.

It belongs to the bacterial ribosomal protein bS20 family.

Its function is as follows. Binds directly to 16S ribosomal RNA. The protein is Small ribosomal subunit protein bS20 of Nitratiruptor sp. (strain SB155-2).